Here is a 119-residue protein sequence, read N- to C-terminus: uncharacterized protein (119 aa).

It localises to the mitochondrion. The protein resides in the nucleus. This is an uncharacterized protein from Schizosaccharomyces pombe (strain 972 / ATCC 24843) (Fission yeast).